The sequence spans 464 residues: Lysosomal dipeptide transporter MFSD1 (464 aa).

A Dileucine internalization motif motif is present at residues 11–12; that stretch reads LL. Residue Ser-20 is modified to Phosphoserine. 12 helical membrane-spanning segments follow: residues 38–58, 82–102, 112–132, 134–154, 190–210, 214–234, 265–285, 303–323, 330–350, 360–380, 391–411, and 417–437; these read LAHR…SYFC, LLYA…GFLI, TVIF…GGIF, AFWL…SLAV, LMGW…HMTL, LMIG…LAYL, LILV…FIGL, AINS…GLLV, IIWV…LAFT, LLGF…AFIV, FMQS…GMIL, and LLLE…VVCL.

Belongs to the major facilitator superfamily. Homodimer. Interacts with lysosomal protein GLMP (via lumenal domain); the interaction starts while both proteins are still in the endoplasmic reticulum and is required for stabilization of MFSD1 in lysosomes but has no direct effect on its targeting to lysosomes or transporter activity. In terms of processing, not N-glycosylated. In terms of tissue distribution, in brain, expressed in the cortex, striatum hippocampus, hypothalamus, thalamus and brainstem (at protein level). Widely expressed with highest levels in kidney and spleen (at protein level).

The protein resides in the lysosome membrane. The catalysed reaction is L-alpha-aminoacyl-L-arginine(out) = L-alpha-aminoacyl-L-arginine(in). It carries out the reaction L-arginyl-L-alpha-amino acid(out) = L-arginyl-L-alpha-amino acid(in). It catalyses the reaction L-arginyl-glycine(out) = L-arginyl-glycine(in). The enzyme catalyses L-alpha-aminoacyl-L-lysine(out) = L-alpha-aminoacyl-L-lysine(in). The catalysed reaction is L-aspartyl-L-lysine(out) = L-aspartyl-L-lysine(in). It carries out the reaction L-alanyl-L-lysine(out) = L-alanyl-L-lysine(in). It catalyses the reaction L-lysyl-L-alpha-amino acid(out) = L-lysyl-L-alpha-amino acid(in). The enzyme catalyses L-lysyl-L-alanine(out) = L-lysyl-L-alanine(in). The catalysed reaction is L-lysyl-L-lysine(out) = L-lysyl-L-lysine(in). It carries out the reaction L-lysyl-glycine(out) = L-lysyl-glycine(in). It catalyses the reaction L-alpha-aminoacyl-L-histidine(out) = L-alpha-aminoacyl-L-histidine(in). The enzyme catalyses L-histidyl-L-alpha-amino acid(out) = L-histidyl-L-alpha-amino acid(in). The catalysed reaction is L-histidyl-glycine(out) = L-histidyl-glycine(in). Lysosomal dipeptide uniporter that selectively exports lysine, arginine or histidine-containing dipeptides with a net positive charge from the lysosome lumen into the cytosol. Could play a role in a specific type of protein O-glycosylation indirectly regulating macrophages migration and tissue invasion. Also essential for liver homeostasis. This is Lysosomal dipeptide transporter MFSD1 from Mus musculus (Mouse).